A 420-amino-acid chain; its full sequence is Innexin-3 (420 aa).

Transmembrane regions (helical) follow at residues 33-53 (ATLL…GSAI), 104-124 (WVPI…WIWS), 193-213 (MLYI…FIIL), and 278-298 (IYLF…INTL). The interval 378–405 (NRDFHHGHSTKSTSPGLEEGHHEHLYTP) is disordered. Positions 395–405 (EEGHHEHLYTP) are enriched in basic and acidic residues.

Belongs to the pannexin family. Interacts with F-actin. Evenly distributed along the adjoining membranes of the two pm5 pharyngeal muscle cells.

It localises to the cell membrane. The protein localises to the cell junction. Its subcellular location is the gap junction. Structural component of gap junctions. Plays a role in maintaining gap junction activity to promote phayngeal muscle contraction. This is Innexin-3 from Caenorhabditis elegans.